The sequence spans 81 residues: Cytoplasmic envelopment protein 3 (81 aa).

Gly2 is lipidated: N-myristoyl glycine; by host. Residues 22–23 carry the Di-leucine-like internalization motif motif; sequence LV. Positions 41-47 are asp/Glu-rich (acidic); that stretch reads DFDENVT. The interval 47-81 is disordered; it reads TEDADKSTQRRPRVIDVTPKRKPSGKSSHSKCAKC. Residues 66 to 81 show a composition bias toward basic residues; it reads KRKPSGKSSHSKCAKC.

It belongs to the herpesviridae cytoplasmic envelopment protein 3 family. Interacts with cytoplasmic envelopment protein 2; this interaction is essential for the proper localization of each protein to the assembly complex and thus for the production of infectious virus. Post-translationally, myristoylation and palmitoylation (probably on one or more of the nearby cysteines at the N-terminus) enable membrane-binding and Golgi apparatus-specific targeting and are essential for efficient packaging. In terms of processing, phosphorylated. Phosphorylation does not seem to be required for recycling to the host Golgi apparatus. Packaging is selective for underphosphorylated forms.

The protein localises to the virion tegument. It localises to the virion membrane. It is found in the host cell membrane. The protein resides in the host Golgi apparatus membrane. Its function is as follows. Plays an important role in the cytoplasmic envelopment of tegument proteins and capsids during the assembly and egress processes. Also participates in viral entry at the fusion step probably by regulating the core fusion machinery. This is Cytoplasmic envelopment protein 3 from Homo sapiens (Human).